The primary structure comprises 248 residues: PF03932 family protein CutC (248 aa).

The protein belongs to the CutC family.

The protein resides in the cytoplasm. The protein is PF03932 family protein CutC of Porphyromonas gingivalis (strain ATCC BAA-308 / W83).